Reading from the N-terminus, the 144-residue chain is uncharacterized protein (144 aa).

The 108-residue stretch at 4–111 folds into the HIT domain; that stretch reads VFCAIIAGEA…LPPRNGDKLS (108 aa). Positions 96-100 match the Histidine triad motif motif; it reads HVHLH.

This is an uncharacterized protein from Mycobacterium tuberculosis (strain CDC 1551 / Oshkosh).